The following is a 71-amino-acid chain: Allergen Art v 2 (71 aa).

Post-translationally, glycosylated. High-mannose oligosaccharides (Man(5-9)GlcNAc(2)).

In Artemisia vulgaris (Mugwort), this protein is Allergen Art v 2.